A 502-amino-acid polypeptide reads, in one-letter code: Probable ADP-dependent glucokinase (502 aa).

The signal sequence occupies residues 1-32 (MFSETFVPSIFSYKHRLLHLSVLFFIVPYWYS). Positions 44 to 497 (SVETAMFLSW…LLYSQFYRLN (454 aa)) constitute an ADPK domain. 2 N-linked (GlcNAc...) asparagine glycosylation sites follow: Asn89 and Asn190. Glu290, Glu320, and Asp481 together coordinate Mg(2+). Asp481 serves as the catalytic Proton acceptor.

This sequence belongs to the ADP-dependent glucokinase family. Monomer. Mg(2+) is required as a cofactor.

The protein localises to the secreted. It catalyses the reaction D-glucose + ADP = D-glucose 6-phosphate + AMP + H(+). It participates in carbohydrate degradation; glycolysis. In terms of biological role, catalyzes the phosphorylation of D-glucose to D-glucose 6-phosphate using ADP as the phosphate donor. GDP and CDP can replace ADP, but with reduced efficiency. This is Probable ADP-dependent glucokinase from Caenorhabditis elegans.